Consider the following 434-residue polypeptide: ATP-dependent RNA helicase sub2 (434 aa).

Positions 59–87 (TGFRDFLLKGELLRAITDCGFEHPSEVQQ) match the Q motif motif. The region spanning 90–265 (IPTAILNVDV…KKFMRNPLEV (176 aa)) is the Helicase ATP-binding domain. 103–110 (AKSGLGKT) provides a ligand contact to ATP. The DECD box motif lies at 212-215 (DECD). The Helicase C-terminal domain occupies 293–430 (KLNELLDSLE…EYPEEGVDSS (138 aa)).

Belongs to the DEAD box helicase family. DECD subfamily.

The protein localises to the nucleus. The enzyme catalyses ATP + H2O = ADP + phosphate + H(+). Functionally, ATP-binding RNA helicase involved in transcription elongation and required for the export of mRNA out of the nucleus. SUB2 also plays a role in pre-mRNA splicing and spliceosome assembly. May be involved in rDNA and telomeric silencing, and maintenance of genome integrity. The protein is ATP-dependent RNA helicase sub2 (sub2) of Emericella nidulans (strain FGSC A4 / ATCC 38163 / CBS 112.46 / NRRL 194 / M139) (Aspergillus nidulans).